The primary structure comprises 360 residues: Peptide chain release factor 1 (360 aa).

Glutamine 235 bears the N5-methylglutamine mark.

The protein belongs to the prokaryotic/mitochondrial release factor family. Post-translationally, methylated by PrmC. Methylation increases the termination efficiency of RF1.

The protein resides in the cytoplasm. Its function is as follows. Peptide chain release factor 1 directs the termination of translation in response to the peptide chain termination codons UAG and UAA. This is Peptide chain release factor 1 from Burkholderia cenocepacia (strain ATCC BAA-245 / DSM 16553 / LMG 16656 / NCTC 13227 / J2315 / CF5610) (Burkholderia cepacia (strain J2315)).